The following is a 92-amino-acid chain: Nodulation protein F (92 aa).

The Carrier domain maps to 4 to 88 (QLTLEIISAI…DVVEAVRGLL (85 aa)). S45 bears the O-(pantetheine 4'-phosphoryl)serine mark.

Post-translationally, 4'-phosphopantetheine is transferred from CoA to a specific serine of apo-NodF.

In terms of biological role, proposed to synthesize nod factor fatty acyl chain. Involved in trans-2,trans-4,trans-6,cis-11-octadecatetraenoic acid biosynthesis. This Rhizobium leguminosarum bv. viciae protein is Nodulation protein F (nodF).